Here is a 409-residue protein sequence, read N- to C-terminus: Lactadherin (409 aa).

EGF-like domains lie at 2–41 (SGDFCDSSLCLNGGTCLLDQDPQKPFHCLCPEGFTGLICN) and 44–88 (EKGP…IHCE). 3 cysteine pairs are disulfide-bonded: Cys-6–Cys-17, Cys-11–Cys-29, and Cys-31–Cys-40. The N-linked (GlcNAc...) asparagine glycan is linked to Asn-41. Intrachain disulfides connect Cys-48/Cys-59, Cys-53/Cys-76, Cys-78/Cys-87, Cys-91/Cys-247, Cys-234/Cys-238, and Cys-252/Cys-409. The Cell attachment site signature appears at 67–69 (RGD). 2 consecutive F5/8 type C domains span residues 91–247 (CNAP…LLGC) and 252–409 (CAEP…LLGC). The N-linked (GlcNAc...) asparagine glycan is linked to Asn-372.

Mammary epithelial cell surfaces and spermatozoan. Also present in testis, epididymis, uterus, adrenal gland, tonsil, muscle, heart, lymphatic gland, thymus and kidney but not spleen, liver, lung or brain.

Its subcellular location is the membrane. It localises to the secreted. It is found in the cytoplasmic vesicle. The protein localises to the secretory vesicle. The protein resides in the acrosome membrane. Contributes to phagocytic removal of apoptotic cells in many tissues. Plays an important role in the maintenance of intestinal epithelial homeostasis and the promotion of mucosal healing. Promotes VEGF-dependent neovascularization. Specific ligand for the alpha-v/beta-3 and alpha-v/beta-5 receptors. Also binds to phosphatidylserine-enriched cell surfaces in a receptor-independent manner. Zona pellucida-binding protein which may play a role in gamete interaction. This is Lactadherin (MFGE8) from Sus scrofa (Pig).